The sequence spans 198 residues: MARCKS-related protein (198 aa).

The interval 1–198 (MGSQSSKAPR…DPAPASEQNE (198 aa)) is disordered. The N-myristoyl glycine moiety is linked to residue G2. Residue T14 is modified to Phosphothreonine. 4 positions are modified to phosphoserine: S22, S36, S41, and S48. Over residues 53–62 (GTEEAAGATG) the composition is skewed to low complexity. A Phosphoserine modification is found at S71. Residues 76–85 (AKGEVPPKET) are compositionally biased toward basic and acidic residues. T85 carries the phosphothreonine modification. Over residues 86 to 98 (PKKKKKFSFKKPF) the composition is skewed to basic residues. An effector domain involved in lipid-binding and calmodulin-binding region spans residues 87-110 (KKKKKFSFKKPFKLSGLSFKRNRK). A phosphoserine; by PKC mark is found at S93, S101, and S104. Position 119 is a phosphoserine (S119). The residue at position 120 (S120) is a Phosphoserine; by MAPK8. Residue S132 is modified to Phosphoserine. T148 is subject to Phosphothreonine; by MAPK8. A phosphoserine mark is found at S151 and S162. Residues 156-167 (AKGAEASAAAKG) show a composition bias toward low complexity. T170 bears the Phosphothreonine mark. T182 carries the phosphothreonine; by MAPK8 modification.

It belongs to the MARCKS family. As to quaternary structure, binds to filamentous actin (F-actin), but not to monomeric G-actin, independently of its phosphorylation status. Interacts with calmodulin. Phosphorylated. Phosphorylation at Ser-120 and Thr-182 is non-redundantly catalyzed by MAPK8 in vivo. Phosphorylation at Thr-148 is preferentially catalyzed by MAPK8 in vivo, but this modification can also be catalyzed by other kinases in the absence of MAPK8. May be phosphorylated by protein kinase C, which disrupts the interaction with calmodulin.

It localises to the cytoplasm. Its subcellular location is the cytoskeleton. It is found in the cell membrane. Controls cell movement by regulating actin cytoskeleton homeostasis and filopodium and lamellipodium formation. When unphosphorylated, induces cell migration. When phosphorylated by MAPK8, induces actin bundles formation and stabilization, thereby reducing actin plasticity, hence restricting cell movement, including neuronal migration. May be involved in coupling the protein kinase C and calmodulin signal transduction systems. This is MARCKS-related protein (MARCKSL1) from Bos taurus (Bovine).